A 387-amino-acid polypeptide reads, in one-letter code: Cyclin-J-like protein (387 aa).

Positions 13 to 142 constitute a Cyclin N-terminal domain; the sequence is DVHCTLREKE…LLEAFSWDLC (130 aa).

The protein belongs to the cyclin family. Cyclin J subfamily.

The chain is Cyclin-J-like protein (Ccnjl) from Mus musculus (Mouse).